The following is a 156-amino-acid chain: MPRKGPAPKRPVVADPVYGSPVVSQLVNKILLDGKKGLAERIVYDALEGVSSKSGNDAVATLKKALDNIRPTLEVRSRRVGGSTYQVPVEVKPHRANTLALRWLTSYAKGRREKTMTERLANEILDASNGLGAAVKRREDTHKMAESNKAFAHYRW.

The protein belongs to the universal ribosomal protein uS7 family. Part of the 30S ribosomal subunit. Contacts proteins S9 and S11.

One of the primary rRNA binding proteins, it binds directly to 16S rRNA where it nucleates assembly of the head domain of the 30S subunit. Is located at the subunit interface close to the decoding center, probably blocks exit of the E-site tRNA. This chain is Small ribosomal subunit protein uS7, found in Leifsonia xyli subsp. xyli (strain CTCB07).